The sequence spans 1034 residues: Presequence protease, mitochondrial (1034 aa).

The transit peptide at 1–29 (MLKGGMLSRWKMWSPQYKILRNHLINFKS) directs the protein to the mitochondrion. Zn(2+) is bound at residue His128. Glu131 acts as the Proton acceptor in catalysis. Zn(2+) is bound by residues His132 and Glu229.

The protein belongs to the peptidase M16 family. PreP subfamily. As to quaternary structure, homodimer. The cofactor is Zn(2+).

It localises to the mitochondrion. ATP-independent protease that degrades mitochondrial transit peptides after their cleavage. Also degrades other unstructured peptides. The protein is Presequence protease, mitochondrial of Drosophila melanogaster (Fruit fly).